Consider the following 181-residue polypeptide: Inner kinetochore subunit MCM16 (181 aa).

A coiled-coil region spans residues 112–171; it reads KQLIESRAERDELMSKLIELSSKFPKPTIPPDDSDTAGKQVEVEKENETIQELMIALQIH.

It belongs to the CENP-H/MCM16 family. Component of the heterotrimeric kinetochore subcomplex CTF3, which consists of CTF3, MCM16 and MCM22. The CTF3 subcomplex is part of a larger constitutive centromere-associated network (CCAN) (also known as central kinetochore CTF19 complex in yeast), which is composed of at least AME1, CHL4, CNN1, CTF3, CTF19, IML3, MCM16, MCM21, MCM22, MHF1, MHF2, MIF2, NKP1, NKP2, OKP1 and WIP1. Interacts with CTF19.

It is found in the nucleus. Its subcellular location is the chromosome. The protein localises to the centromere. The protein resides in the kinetochore. Component of the kinetochore, a multiprotein complex that assembles on centromeric DNA and attaches chromosomes to spindle microtubules, mediating chromosome segregation and sister chromatid segregation during meiosis and mitosis. Component of the inner kinetochore constitutive centromere-associated network (CCAN), which serves as a structural platform for outer kinetochore assembly. The sequence is that of Inner kinetochore subunit MCM16 (MCM16) from Saccharomyces cerevisiae (strain ATCC 204508 / S288c) (Baker's yeast).